The primary structure comprises 307 residues: Homoserine O-acetyltransferase (307 aa).

Catalysis depends on C142, which acts as the Acyl-thioester intermediate. Positions 163 and 192 each coordinate substrate. Catalysis depends on H235, which acts as the Proton acceptor. E237 is a catalytic residue. Residue R249 participates in substrate binding.

This sequence belongs to the MetA family.

It localises to the cytoplasm. The catalysed reaction is L-homoserine + acetyl-CoA = O-acetyl-L-homoserine + CoA. Its pathway is amino-acid biosynthesis; L-methionine biosynthesis via de novo pathway; O-acetyl-L-homoserine from L-homoserine: step 1/1. In terms of biological role, transfers an acetyl group from acetyl-CoA to L-homoserine, forming acetyl-L-homoserine. The protein is Homoserine O-acetyltransferase of Rhizobium leguminosarum bv. trifolii (strain WSM2304).